Here is a 367-residue protein sequence, read N- to C-terminus: Peptide chain release factor 2 (367 aa).

Glutamine 254 carries the post-translational modification N5-methylglutamine.

This sequence belongs to the prokaryotic/mitochondrial release factor family. In terms of processing, methylated by PrmC. Methylation increases the termination efficiency of RF2.

The protein resides in the cytoplasm. Its function is as follows. Peptide chain release factor 2 directs the termination of translation in response to the peptide chain termination codons UGA and UAA. This is Peptide chain release factor 2 from Variovorax paradoxus (strain S110).